Consider the following 150-residue polypeptide: Large ribosomal subunit protein uL15 (150 aa).

The span at 1-15 (MNLSNLQPAEGSTHN) shows a compositional bias: polar residues. Residues 1–52 (MNLSNLQPAEGSTHNQNKRLGRGEGSGKGGTSARGHKGAKSRSGYSKKIGFE) form a disordered region. The segment covering 23-32 (GEGSGKGGTS) has biased composition (gly residues).

Belongs to the universal ribosomal protein uL15 family. In terms of assembly, part of the 50S ribosomal subunit.

Functionally, binds to the 23S rRNA. The chain is Large ribosomal subunit protein uL15 from Flavobacterium psychrophilum (strain ATCC 49511 / DSM 21280 / CIP 103535 / JIP02/86).